The primary structure comprises 377 residues: Prolargin (377 aa).

Residues Met1–Gly21 form the signal peptide. A disordered region spans residues Gln22 to Pro61. 2 stretches are compositionally biased toward pro residues: residues Arg36–His45 and Asp52–Pro61. LRR repeat units lie at residues Arg90 to Ile109, Thr110 to Ile133, Arg134 to Leu157, Glu158 to Ile178, Ser179 to Leu202, Ser203 to Leu228, Arg229 to Ile249, Glu250 to Leu273, Ser274 to Ile298, Ser299 to Ile318, Glu319 to Leu357, and Lys358 to Ile377. Asn119 carries an N-linked (GlcNAc...) asparagine glycan. Asn284, Asn315, and Asn322 each carry an N-linked (GlcNAc...) asparagine glycan. A disulfide bridge connects residues Cys327 and Cys368.

It belongs to the small leucine-rich proteoglycan (SLRP) family. SLRP class II subfamily. As to quaternary structure, binds the basement membrane heparan sulfate proteoglycan perlecan and triple helical collagens type I and type II. In terms of processing, glycosylated; contains heparan sulfate.

The protein localises to the secreted. Its subcellular location is the extracellular space. It localises to the extracellular matrix. May anchor basement membranes to the underlying connective tissue. This chain is Prolargin (Prelp), found in Rattus norvegicus (Rat).